Here is a 499-residue protein sequence, read N- to C-terminus: Calcium/calmodulin-dependent protein kinase type II subunit delta (499 aa).

Ala-2 is modified (N-acetylalanine). A Protein kinase domain is found at 14–272; the sequence is YQLFEELGKG…ASEALKHPWI (259 aa). Residues 20–28 and Lys-43 contribute to the ATP site; that span reads LGKGAFSVV. Asp-136 (proton acceptor) is an active-site residue. Residues 283-292 form an autoinhibitory domain region; that stretch reads HRQETVDCLK. Thr-287 is subject to Phosphothreonine; by autocatalysis. Residues 291-301 form a calmodulin-binding region; sequence LKKFNARRKLK. Residues Thr-306 and Thr-307 each carry the phosphothreonine; by autocatalysis modification. Ser-315 is subject to Phosphoserine. Residue Lys-318 is modified to N6-acetyllysine. Phosphoserine is present on residues Ser-319 and Ser-330. Thr-331 is modified (phosphothreonine). Position 333 is a phosphoserine (Ser-333). Phosphothreonine is present on residues Thr-336 and Thr-337. Residues Ser-404, Ser-490, and Ser-494 each carry the phosphoserine modification.

It belongs to the protein kinase superfamily. CAMK Ser/Thr protein kinase family. CaMK subfamily. As to quaternary structure, CAMK2 is composed of 4 different chains: alpha (CAMK2A), beta (CAMK2B), gamma (CAMK2G), and delta (CAMK2D). The different isoforms assemble into homo- or heteromultimeric holoenzymes composed of 12 subunits with two hexameric rings stacked one on top of the other. Interacts with RRAD CACNB2. Post-translationally, autophosphorylation of Thr-287 following activation by Ca(2+)/calmodulin. Phosphorylation of Thr-287 locks the kinase into an activated state.

Its subcellular location is the cell membrane. The protein localises to the sarcolemma. The protein resides in the sarcoplasmic reticulum membrane. It carries out the reaction L-seryl-[protein] + ATP = O-phospho-L-seryl-[protein] + ADP + H(+). The catalysed reaction is L-threonyl-[protein] + ATP = O-phospho-L-threonyl-[protein] + ADP + H(+). Its activity is regulated as follows. Activated by Ca(2+)/calmodulin. Binding of calmodulin results in conformational change that relieves intrasteric autoinhibition and allows autophosphorylation of Thr-287 which turns the kinase in a constitutively active form and confers to the kinase a Ca(2+)-independent activity. Its function is as follows. Calcium/calmodulin-dependent protein kinase involved in the regulation of Ca(2+) homeostatis and excitation-contraction coupling (ECC) in heart by targeting ion channels, transporters and accessory proteins involved in Ca(2+) influx into the myocyte, Ca(2+) release from the sarcoplasmic reticulum (SR), SR Ca(2+) uptake and Na(+) and K(+) channel transport. Targets also transcription factors and signaling molecules to regulate heart function. In its activated form, is involved in the pathogenesis of dilated cardiomyopathy and heart failure. Contributes to cardiac decompensation and heart failure by regulating SR Ca(2+) release via direct phosphorylation of RYR2 Ca(2+) channel on 'Ser-2808'. In the nucleus, phosphorylates the MEF2 repressor HDAC4, promoting its nuclear export and binding to 14-3-3 protein, and expression of MEF2 and genes involved in the hypertrophic program. Is essential for left ventricular remodeling responses to myocardial infarction. In pathological myocardial remodeling acts downstream of the beta adrenergic receptor signaling cascade to regulate key proteins involved in ECC. Regulates Ca(2+) influx to myocytes by binding and phosphorylating the L-type Ca(2+) channel subunit beta-2 CACNB2. In addition to Ca(2+) channels, can target and regulate the cardiac sarcolemmal Na(+) channel Nav1.5/SCN5A and the K+ channel Kv4.3/KCND3, which contribute to arrhythmogenesis in heart failure. Phosphorylates phospholamban (PLN/PLB), an endogenous inhibitor of SERCA2A/ATP2A2, contributing to the enhancement of SR Ca(2+) uptake that may be important in frequency-dependent acceleration of relaxation (FDAR) and maintenance of contractile function during acidosis. May participate in the modulation of skeletal muscle function in response to exercise, by regulating SR Ca(2+) transport through phosphorylation of PLN/PLB and triadin, a ryanodine receptor-coupling factor. In response to interferon-gamma (IFN-gamma) stimulation, catalyzes phosphorylation of STAT1, stimulating the JAK-STAT signaling pathway. This chain is Calcium/calmodulin-dependent protein kinase type II subunit delta (CAMK2D), found in Sus scrofa (Pig).